Consider the following 258-residue polypeptide: Fibroblast growth factor-binding protein 3 (258 aa).

Positions 1–26 (MTPPKLRASLSPSLLLLLSGCLLAAA) are cleaved as a signal peptide. 2 cysteine pairs are disulfide-bonded: Cys-59–Cys-80 and Cys-90–Cys-124. A disordered region spans residues 146-231 (RLVPRASPPA…GTGPDPDGLD (86 aa)). The segment covering 186–197 (GTPPPQSAPPKE) has biased composition (pro residues). The span at 198-209 (NPSERKTNEGKR) shows a compositional bias: basic and acidic residues. Cys-241 and Cys-249 are disulfide-bonded.

The protein belongs to the fibroblast growth factor-binding protein family. Interacts with FGF2.

It is found in the secreted. Heparin-binding protein which binds to FGF2, prevents binding of FGF2 to heparin and probably inhibits immobilization of FGF2 on extracellular matrix glycosaminoglycans, allowing its release and subsequent activation of FGFR signaling which leads to increased vascular permeability. This Homo sapiens (Human) protein is Fibroblast growth factor-binding protein 3 (FGFBP3).